The chain runs to 186 residues: Peptidyl-tRNA hydrolase (186 aa).

Tyrosine 17 contacts tRNA. Residue histidine 22 is the Proton acceptor of the active site. The tRNA site is built by tyrosine 64 and asparagine 66.

It belongs to the PTH family. As to quaternary structure, monomer.

Its subcellular location is the cytoplasm. The catalysed reaction is an N-acyl-L-alpha-aminoacyl-tRNA + H2O = an N-acyl-L-amino acid + a tRNA + H(+). Functionally, hydrolyzes ribosome-free peptidyl-tRNAs (with 1 or more amino acids incorporated), which drop off the ribosome during protein synthesis, or as a result of ribosome stalling. In terms of biological role, catalyzes the release of premature peptidyl moieties from peptidyl-tRNA molecules trapped in stalled 50S ribosomal subunits, and thus maintains levels of free tRNAs and 50S ribosomes. The protein is Peptidyl-tRNA hydrolase of Methylacidiphilum infernorum (isolate V4) (Methylokorus infernorum (strain V4)).